A 425-amino-acid polypeptide reads, in one-letter code: Serine--tRNA ligase (425 aa).

Disordered stretches follow at residues 43-69 (QRSSLQAEGNRIGKEVGQRIQQGSDPK) and 108-134 (LPNLPSPDCPEGRDENDNQERHRWGKP). A compositionally biased stretch (basic and acidic residues) spans 117-134 (PEGRDENDNQERHRWGKP). 233–235 (TAE) contacts L-serine. An ATP-binding site is contributed by 264 to 266 (RRE). Glu287 contacts L-serine. Residue 351–354 (EISS) coordinates ATP. Position 385 (Ser385) interacts with L-serine.

Belongs to the class-II aminoacyl-tRNA synthetase family. Type-1 seryl-tRNA synthetase subfamily. In terms of assembly, homodimer. The tRNA molecule binds across the dimer.

It is found in the cytoplasm. It catalyses the reaction tRNA(Ser) + L-serine + ATP = L-seryl-tRNA(Ser) + AMP + diphosphate + H(+). The catalysed reaction is tRNA(Sec) + L-serine + ATP = L-seryl-tRNA(Sec) + AMP + diphosphate + H(+). The protein operates within aminoacyl-tRNA biosynthesis; selenocysteinyl-tRNA(Sec) biosynthesis; L-seryl-tRNA(Sec) from L-serine and tRNA(Sec): step 1/1. Its function is as follows. Catalyzes the attachment of serine to tRNA(Ser). Is also able to aminoacylate tRNA(Sec) with serine, to form the misacylated tRNA L-seryl-tRNA(Sec), which will be further converted into selenocysteinyl-tRNA(Sec). In Prochlorococcus marinus (strain MIT 9313), this protein is Serine--tRNA ligase.